A 370-amino-acid polypeptide reads, in one-letter code: Cobalt-precorrin-5B C(1)-methyltransferase (370 aa).

This sequence belongs to the CbiD family.

It catalyses the reaction Co-precorrin-5B + S-adenosyl-L-methionine = Co-precorrin-6A + S-adenosyl-L-homocysteine. The protein operates within cofactor biosynthesis; adenosylcobalamin biosynthesis; cob(II)yrinate a,c-diamide from sirohydrochlorin (anaerobic route): step 6/10. Functionally, catalyzes the methylation of C-1 in cobalt-precorrin-5B to form cobalt-precorrin-6A. The polypeptide is Cobalt-precorrin-5B C(1)-methyltransferase (Pseudomonas syringae pv. tomato (strain ATCC BAA-871 / DC3000)).